Reading from the N-terminus, the 115-residue chain is Nitrogenase-stabilizing/protective protein NifW (115 aa).

This sequence belongs to the NifW family. As to quaternary structure, homotrimer; associates with NifD.

May protect the nitrogenase Fe-Mo protein from oxidative damage. In Stutzerimonas stutzeri (strain A1501) (Pseudomonas stutzeri), this protein is Nitrogenase-stabilizing/protective protein NifW.